The chain runs to 388 residues: Chaperone protein DnaJ (388 aa).

One can recognise a J domain in the interval 4–69 (DYYDILGVDE…EKRQRYDQFG (66 aa)). 3 stretches are compositionally biased toward basic and acidic residues: residues 27–50 (KAME…KEAS), 58–73 (DPEK…HDGV), and 113–124 (GRSERGRGRPGS). 2 disordered regions span residues 27 to 86 (KAME…GRGR) and 99 to 125 (SDIF…PGSD). The CR-type zinc finger occupies 140-225 (GTEKNLRLQK…CGGEGRVQGE (86 aa)). Zn(2+) is bound by residues Cys153, Cys156, Cys173, Cys176, Cys199, Cys202, Cys213, and Cys216. 4 CXXCXGXG motif repeats span residues 153–160 (CESCDGTG), 173–180 (CPKCDGTG), 199–206 (CPRCEGEG), and 213–220 (CDDCGGEG). A compositionally biased stretch (basic and acidic residues) spans 362 to 376 (AHDNFQPRPPEEDTQ). A disordered region spans residues 362–388 (AHDNFQPRPPEEDTQKSFFRRVSDVFS).

This sequence belongs to the DnaJ family. As to quaternary structure, homodimer. Requires Zn(2+) as cofactor.

It localises to the cytoplasm. Functionally, participates actively in the response to hyperosmotic and heat shock by preventing the aggregation of stress-denatured proteins and by disaggregating proteins, also in an autonomous, DnaK-independent fashion. Unfolded proteins bind initially to DnaJ; upon interaction with the DnaJ-bound protein, DnaK hydrolyzes its bound ATP, resulting in the formation of a stable complex. GrpE releases ADP from DnaK; ATP binding to DnaK triggers the release of the substrate protein, thus completing the reaction cycle. Several rounds of ATP-dependent interactions between DnaJ, DnaK and GrpE are required for fully efficient folding. Also involved, together with DnaK and GrpE, in the DNA replication of plasmids through activation of initiation proteins. The sequence is that of Chaperone protein DnaJ from Salinibacter ruber (strain DSM 13855 / M31).